Here is a 384-residue protein sequence, read N- to C-terminus: Sialyltransferase-like protein 3 (384 aa).

Over M1–H5 the chain is Cytoplasmic. The helical; Signal-anchor for type II membrane protein transmembrane segment at W6–F26 threads the bilayer. The Lumenal segment spans residues R27–R384. N-linked (GlcNAc...) asparagine glycosylation occurs at N241.

This sequence belongs to the glycosyltransferase 29 family.

The protein localises to the golgi apparatus membrane. In terms of biological role, possesses sialyltransferase-like activity in vitro. Transfers sialic acid to the glycoprotein asialofetuin. The transferred sialic acid is linked to galactose of Gal-beta-1,3-GalNAc through alpha-2,6-linkage. The chain is Sialyltransferase-like protein 3 from Oryza sativa subsp. japonica (Rice).